The primary structure comprises 370 residues: Histidinol-phosphate aminotransferase (370 aa).

N6-(pyridoxal phosphate)lysine is present on lysine 220.

This sequence belongs to the class-II pyridoxal-phosphate-dependent aminotransferase family. Histidinol-phosphate aminotransferase subfamily. In terms of assembly, homodimer. Pyridoxal 5'-phosphate serves as cofactor.

It catalyses the reaction L-histidinol phosphate + 2-oxoglutarate = 3-(imidazol-4-yl)-2-oxopropyl phosphate + L-glutamate. It participates in amino-acid biosynthesis; L-histidine biosynthesis; L-histidine from 5-phospho-alpha-D-ribose 1-diphosphate: step 7/9. This Granulibacter bethesdensis (strain ATCC BAA-1260 / CGDNIH1) protein is Histidinol-phosphate aminotransferase.